Reading from the N-terminus, the 354-residue chain is Probable L-ascorbate-6-phosphate lactonase UlaG (354 aa).

Belongs to the UlaG family. A divalent metal cation is required as a cofactor.

It localises to the cytoplasm. It carries out the reaction L-ascorbate 6-phosphate + H2O = 3-dehydro-L-gulonate 6-phosphate. Its pathway is cofactor degradation; L-ascorbate degradation; D-xylulose 5-phosphate from L-ascorbate: step 1/4. In terms of biological role, probably catalyzes the hydrolysis of L-ascorbate-6-P into 3-keto-L-gulonate-6-P. Is essential for L-ascorbate utilization under anaerobic conditions. This is Probable L-ascorbate-6-phosphate lactonase UlaG from Shigella dysenteriae serotype 1 (strain Sd197).